The sequence spans 393 residues: FAD-dependent monooxygenase dbaB (393 aa).

The signal sequence occupies residues 1–23 (MTRTSPTLPVIILGAGMVGLTLA). 2 residues coordinate FAD: Glu37 and Arg107. Asn128 carries an N-linked (GlcNAc...) asparagine glycan. Tyr221 is a catalytic residue. A glycan (N-linked (GlcNAc...) asparagine) is linked at Asn233. Asp320 lines the FAD pocket.

It belongs to the paxM FAD-dependent monooxygenase family. Requires FAD as cofactor.

The protein operates within secondary metabolite biosynthesis. Functionally, FAD-dependent monooxygenase; part of the gene cluster that mediates the biosynthesis of the antibiotic 2,4-dihydroxy-3-methyl-6-(2-oxopropyl)benzaldehyde (DHMBA) and its derivatives. The direct non-reducing polyketide synthase dbaI product is 2,4-dihydroxy-3-methyl-6-(2-oxopropyl)benzaldehyde (DHMBA), produced by condensation of one acetyl-CoA starter unit with 4 malonyl-CoA units and one methylation step. The FAD-dependent monooxygenase dbaH is responsible for the synthesis of yellow pigments derived from the oxidation of DHMBA. The roles of dbaB, C, E and F have still to be determined. The polypeptide is FAD-dependent monooxygenase dbaB (Emericella nidulans (strain FGSC A4 / ATCC 38163 / CBS 112.46 / NRRL 194 / M139) (Aspergillus nidulans)).